Here is a 315-residue protein sequence, read N- to C-terminus: Methionyl-tRNA formyltransferase (315 aa).

Position 117 to 120 (117 to 120 (SLLP)) interacts with (6S)-5,6,7,8-tetrahydrofolate.

The protein belongs to the Fmt family.

The catalysed reaction is L-methionyl-tRNA(fMet) + (6R)-10-formyltetrahydrofolate = N-formyl-L-methionyl-tRNA(fMet) + (6S)-5,6,7,8-tetrahydrofolate + H(+). Its function is as follows. Attaches a formyl group to the free amino group of methionyl-tRNA(fMet). The formyl group appears to play a dual role in the initiator identity of N-formylmethionyl-tRNA by promoting its recognition by IF2 and preventing the misappropriation of this tRNA by the elongation apparatus. This chain is Methionyl-tRNA formyltransferase, found in Methylibium petroleiphilum (strain ATCC BAA-1232 / LMG 22953 / PM1).